Reading from the N-terminus, the 205-residue chain is Probable GTP-binding protein EngB (205 aa).

In terms of domain architecture, EngB-type G spans 22–198 (HLPEYAFIGR…LSYIDEVNQD (177 aa)). Residues 30–37 (GRSNVGKS), 57–61 (GKTQL), 75–78 (DLPG), 142–145 (TKAD), and 177–179 (TSA) each bind GTP. Positions 37 and 59 each coordinate Mg(2+).

It belongs to the TRAFAC class TrmE-Era-EngA-EngB-Septin-like GTPase superfamily. EngB GTPase family. Mg(2+) serves as cofactor.

Functionally, necessary for normal cell division and for the maintenance of normal septation. In Flavobacterium psychrophilum (strain ATCC 49511 / DSM 21280 / CIP 103535 / JIP02/86), this protein is Probable GTP-binding protein EngB.